Here is a 266-residue protein sequence, read N- to C-terminus: MPSNDYWQFPAIDPVLFHIWGPLDIRWYGLAYIAAFAFAYFWGMRQTKTDPNWSKEEFSDLMFWGFIGVILGGRIGYTLFYHFDYFIDNPLYLFYIHEGGMSFHGGLLGVIAAMYLYARKKQRSFLQVGDFVAPLVPMGLFFGRIGNFINGELWGRAAEVPWAMYFPSGGPVPRHPSQLYEALLEGLLLFAVILWFQRKPRGVGAVSGLFLLGYGVARFIVEFFREPDAHLGLLSLGMSMGQWLTLPMIILGIILMVRAKKQLPTG.

7 consecutive transmembrane segments (helical) span residues Ile-19–Ala-39, Leu-61–Tyr-81, Leu-91–Ile-111, Phe-125–Ile-145, Pro-176–Phe-196, Gly-204–Phe-224, and Gly-237–Val-257. Residue Arg-144 participates in a 1,2-diacyl-sn-glycero-3-phospho-(1'-sn-glycerol) binding.

The protein belongs to the Lgt family.

It localises to the cell inner membrane. It catalyses the reaction L-cysteinyl-[prolipoprotein] + a 1,2-diacyl-sn-glycero-3-phospho-(1'-sn-glycerol) = an S-1,2-diacyl-sn-glyceryl-L-cysteinyl-[prolipoprotein] + sn-glycerol 1-phosphate + H(+). Its pathway is protein modification; lipoprotein biosynthesis (diacylglyceryl transfer). Its function is as follows. Catalyzes the transfer of the diacylglyceryl group from phosphatidylglycerol to the sulfhydryl group of the N-terminal cysteine of a prolipoprotein, the first step in the formation of mature lipoproteins. The sequence is that of Phosphatidylglycerol--prolipoprotein diacylglyceryl transferase from Idiomarina loihiensis (strain ATCC BAA-735 / DSM 15497 / L2-TR).